Reading from the N-terminus, the 320-residue chain is Malate dehydrogenase (320 aa).

Residues 10-15 and D34 each bind NAD(+); that span reads GAGQIG. Substrate-binding residues include R83 and R89. NAD(+) is bound by residues N96 and 119–121; that span reads ITN. Substrate-binding residues include N121 and R152. The active-site Proton acceptor is H176.

Belongs to the LDH/MDH superfamily. MDH type 3 family.

It carries out the reaction (S)-malate + NAD(+) = oxaloacetate + NADH + H(+). Functionally, catalyzes the reversible oxidation of malate to oxaloacetate. This Ruegeria pomeroyi (strain ATCC 700808 / DSM 15171 / DSS-3) (Silicibacter pomeroyi) protein is Malate dehydrogenase.